A 77-amino-acid chain; its full sequence is Acyl carrier protein (77 aa).

The Carrier domain maps to 2-77; sequence STVEERVKKI…DAIDYILANQ (76 aa). Ser-37 is modified (O-(pantetheine 4'-phosphoryl)serine).

Belongs to the acyl carrier protein (ACP) family. 4'-phosphopantetheine is transferred from CoA to a specific serine of apo-ACP by AcpS. This modification is essential for activity because fatty acids are bound in thioester linkage to the sulfhydryl of the prosthetic group.

The protein localises to the cytoplasm. It functions in the pathway lipid metabolism; fatty acid biosynthesis. Its function is as follows. Carrier of the growing fatty acid chain in fatty acid biosynthesis. The polypeptide is Acyl carrier protein (Hahella chejuensis (strain KCTC 2396)).